The following is a 208-amino-acid chain: Large ribosomal subunit protein bL25 (208 aa).

A disordered region spans residues methionine 1–arginine 20.

It belongs to the bacterial ribosomal protein bL25 family. CTC subfamily. Part of the 50S ribosomal subunit; part of the 5S rRNA/L5/L18/L25 subcomplex. Contacts the 5S rRNA. Binds to the 5S rRNA independently of L5 and L18.

In terms of biological role, this is one of the proteins that binds to the 5S RNA in the ribosome where it forms part of the central protuberance. This chain is Large ribosomal subunit protein bL25, found in Xylella fastidiosa (strain 9a5c).